A 326-amino-acid chain; its full sequence is ATP-dependent 6-phosphofructokinase (326 aa).

Gly14 serves as a coordination point for ATP. 24-28 (RAVVR) provides a ligand contact to ADP. ATP contacts are provided by residues 75-76 (RF) and 105-108 (GNGS). Asn106 is a binding site for Mg(2+). 129 to 131 (TID) contributes to the substrate binding site. Asp131 serves as the catalytic Proton acceptor. Arg158 lines the ADP pocket. Substrate contacts are provided by residues Arg166 and 173-175 (MGR). ADP-binding positions include 189–191 (GAE), Lys215, and 216–218 (KSA). Substrate is bound by residues Glu225, Arg248, and 254 to 257 (HTQR).

This sequence belongs to the phosphofructokinase type A (PFKA) family. ATP-dependent PFK group I subfamily. Prokaryotic clade 'B1' sub-subfamily. As to quaternary structure, homotetramer. It depends on Mg(2+) as a cofactor.

It localises to the cytoplasm. The catalysed reaction is beta-D-fructose 6-phosphate + ATP = beta-D-fructose 1,6-bisphosphate + ADP + H(+). It functions in the pathway carbohydrate degradation; glycolysis; D-glyceraldehyde 3-phosphate and glycerone phosphate from D-glucose: step 3/4. With respect to regulation, allosterically activated by ADP and other diphosphonucleosides, and allosterically inhibited by phosphoenolpyruvate. In terms of biological role, catalyzes the phosphorylation of D-fructose 6-phosphate to fructose 1,6-bisphosphate by ATP, the first committing step of glycolysis. The protein is ATP-dependent 6-phosphofructokinase of Coxiella burnetii (strain RSA 493 / Nine Mile phase I).